The chain runs to 287 residues: Orotidine 5'-phosphate decarboxylase (287 aa).

Residue Lys97 is the Proton donor of the active site.

Belongs to the OMP decarboxylase family. Type 2 subfamily.

It catalyses the reaction orotidine 5'-phosphate + H(+) = UMP + CO2. It functions in the pathway pyrimidine metabolism; UMP biosynthesis via de novo pathway; UMP from orotate: step 2/2. The sequence is that of Orotidine 5'-phosphate decarboxylase from Clostridium perfringens (strain SM101 / Type A).